We begin with the raw amino-acid sequence, 257 residues long: N-acetylglucosaminyldiphosphoundecaprenol N-acetyl-beta-D-mannosaminyltransferase (257 aa).

The protein belongs to the glycosyltransferase 26 family. TagA/TarA subfamily.

It carries out the reaction UDP-N-acetyl-alpha-D-mannosamine + N-acetyl-alpha-D-glucosaminyl-di-trans,octa-cis-undecaprenyl diphosphate = N-acetyl-beta-D-mannosaminyl-(1-&gt;4)-N-acetyl-alpha-D-glucosaminyl di-trans,octa-cis-undecaprenyl diphosphate + UDP + H(+). Its pathway is cell wall biogenesis; poly(ribitol phosphate) teichoic acid biosynthesis. In terms of biological role, catalyzes the conversion of GlcNAc-PP-undecaprenol into ManNAc-GlcNAc-PP-undecaprenol, the first committed lipid intermediate in the de novo synthesis of teichoic acid. The protein is N-acetylglucosaminyldiphosphoundecaprenol N-acetyl-beta-D-mannosaminyltransferase of Bacillus spizizenii (strain ATCC 23059 / NRRL B-14472 / W23) (Bacillus subtilis subsp. spizizenii).